We begin with the raw amino-acid sequence, 217 residues long: uncharacterized protein (217 aa).

The interval 1–32 (MTLKKHRGKMSEKSNVNKKFTNSTQNNSNWSN) is disordered. Residues 22–32 (NSTQNNSNWSN) are compositionally biased toward low complexity.

This is an uncharacterized protein from Acidianus filamentous virus 2 (isolate Italy/Pozzuoli) (AFV-2).